Reading from the N-terminus, the 440-residue chain is Serine/threonine-protein kinase 2 (440 aa).

One can recognise a Protein kinase domain in the interval 85–440; that stretch reads NDDFYHISTG…FSNWINGESC (356 aa). ATP contacts are provided by residues 91-99 and Lys115; that span reads ISTGGYGIV. The active-site Proton acceptor is Asp306.

This sequence belongs to the protein kinase superfamily. Ser/Thr protein kinase family. Poxviruses subfamily. Post-translationally, phosphorylated in vivo. Autophosphorylated in vitro.

The protein resides in the host endoplasmic reticulum. The protein localises to the host endoplasmic reticulum-Golgi intermediate compartment. It carries out the reaction L-seryl-[protein] + ATP = O-phospho-L-seryl-[protein] + ADP + H(+). The enzyme catalyses L-threonyl-[protein] + ATP = O-phospho-L-threonyl-[protein] + ADP + H(+). Functionally, essential serine-protein kinase involved in the early stage of virion morphogenesis. The chain is Serine/threonine-protein kinase 2 (OPG054) from Sus scrofa (Pig).